The primary structure comprises 62 residues: Ferredoxin-3 (62 aa).

2 consecutive 4Fe-4S ferredoxin-type domains span residues serine 2 to serine 28 and aspartate 29 to alanine 62. Residues cysteine 9, cysteine 12, cysteine 15, cysteine 19, cysteine 38, cysteine 41, cysteine 50, and cysteine 54 each contribute to the [4Fe-4S] cluster site.

It depends on [4Fe-4S] cluster as a cofactor.

In terms of biological role, ferredoxins are iron-sulfur proteins that transfer electrons in a wide variety of metabolic reactions. This chain is Ferredoxin-3, found in Chlorobaculum tepidum (strain ATCC 49652 / DSM 12025 / NBRC 103806 / TLS) (Chlorobium tepidum).